A 218-amino-acid chain; its full sequence is Methylthioribulose-1-phosphate dehydratase (218 aa).

Zn(2+) is bound by residues histidine 107 and histidine 109.

Belongs to the aldolase class II family. MtnB subfamily. Requires Zn(2+) as cofactor.

It catalyses the reaction 5-(methylsulfanyl)-D-ribulose 1-phosphate = 5-methylsulfanyl-2,3-dioxopentyl phosphate + H2O. It participates in amino-acid biosynthesis; L-methionine biosynthesis via salvage pathway; L-methionine from S-methyl-5-thio-alpha-D-ribose 1-phosphate: step 2/6. Catalyzes the dehydration of methylthioribulose-1-phosphate (MTRu-1-P) into 2,3-diketo-5-methylthiopentyl-1-phosphate (DK-MTP-1-P). The sequence is that of Methylthioribulose-1-phosphate dehydratase from Xylella fastidiosa (strain Temecula1 / ATCC 700964).